Reading from the N-terminus, the 299-residue chain is MLFDQIARNKRKTWLLLLVFFLLLGLVGYGVGYLWLGSGFGGMILALVIGFIYAVTMIFQSTNVVMAMNGAREVDEQTAPNLYHVVEDMAMVAQIPMPRVFIVDDPSMNAFATGSSPKNAAVAATTGLLAVMNREELEGVIGHEVSHIRNYDIRISTIAVALASAITMLAVMARNMMFWGGGRRRNDDDRNGSSGLEIILLIISLIAIILAPLAATLVQLAISRQREFLADASSVELTRNPQGMINALLKLDNSAPMQHHVDDASAALFINDPKKESGLQKLFYTHPPISERVERLKQM.

2 helical membrane-spanning segments follow: residues 14–34 (WLLL…VGYL) and 39–59 (GFGG…TMIF). Histidine 143 contacts Zn(2+). Residue glutamate 144 is part of the active site. Position 147 (histidine 147) interacts with Zn(2+). The next 2 helical transmembrane spans lie at 153–173 (IRIS…AVMA) and 198–218 (IILL…ATLV). Glutamate 227 serves as a coordination point for Zn(2+).

This sequence belongs to the peptidase M48B family. Requires Zn(2+) as cofactor.

The protein localises to the cell membrane. This Streptococcus thermophilus (strain CNRZ 1066) protein is Protease HtpX homolog.